The sequence spans 230 residues: UPF0173 metal-dependent hydrolase Rsph17029_0942 (230 aa).

It belongs to the UPF0173 family.

The sequence is that of UPF0173 metal-dependent hydrolase Rsph17029_0942 from Cereibacter sphaeroides (strain ATCC 17029 / ATH 2.4.9) (Rhodobacter sphaeroides).